The following is a 262-amino-acid chain: Lysine 5,6-aminomutase beta subunit (262 aa).

Positions 120–262 (KIVVVGASTG…VKTLNDRMNS (143 aa)) constitute a B12-binding domain. Residues 130 to 136 (TDAHTVG) and histidine 133 contribute to the adenosylcob(III)alamin site. The residue at position 144 (lysine 144) is an N6-(pyridoxal phosphate)lysine. Residues 185 to 192 (LVSQTVTQ), 219 to 223 (LCGGP), and 239 to 244 (FGPGRF) each bind adenosylcob(III)alamin.

This sequence belongs to the KamE family. As to quaternary structure, heterotetramer of 2 alpha and 2 beta subunits. The cofactor is adenosylcob(III)alamin. Pyridoxal 5'-phosphate serves as cofactor.

The catalysed reaction is (3S)-3,6-diaminohexanoate = (3S,5S)-3,5-diaminohexanoate. It catalyses the reaction D-lysine = (2R,5S)-2,5-diaminohexanoate. It participates in amino-acid metabolism; lysine degradation. Rapidly inactivated in the presence of D-lysine and to a lesser extent in the absence of adenosylcobalamin (Adocbl). Activity is stable in the presence of Adocbl when D-lysine is absent. Adocbl imparts thermal stability at 37 degrees Celsius. In terms of biological role, catalyzes the migration of the L-beta-lysine and D-lysine epsilon amino group to the delta carbon to produce 3,5-diaminohexanoate and 2,5-diaminohexanoate, respectively. In Acetoanaerobium sticklandii (strain ATCC 12662 / DSM 519 / JCM 1433 / CCUG 9281 / NCIMB 10654 / HF) (Clostridium sticklandii), this protein is Lysine 5,6-aminomutase beta subunit (kamE).